A 303-amino-acid chain; its full sequence is MQKFDTRTFQGLILTLQDYWARQGCTIVQPLDMEVGAGTSHPMTCLRALGPEPIAAAYVQPSRRPTDGRYGENPNRLQHYYQFQVIIKPSPDNIQELYLGSLKELGMDPTIHDIRFVEDNWENPTLGAWGLGWEVWLNGMEVTQFTYFQQVGGLECKPVTGEITYGLERLAMYIQGVDSVYDLVWSDGPLGKTTYGDVFHQNEVEQSTYNFEYADVDFLFTCFEQYEKEAQQLLALENPLPLPAYERILKAAHSFNLLDARKAISVTERQRYILRIRTLTKAVAEAYYASREALGFPMCNRNK.

The protein belongs to the class-II aminoacyl-tRNA synthetase family. Tetramer of two alpha and two beta subunits.

It is found in the cytoplasm. The enzyme catalyses tRNA(Gly) + glycine + ATP = glycyl-tRNA(Gly) + AMP + diphosphate. In Cronobacter sakazakii (strain ATCC BAA-894) (Enterobacter sakazakii), this protein is Glycine--tRNA ligase alpha subunit.